Reading from the N-terminus, the 641-residue chain is Pumilio homolog 24 (641 aa).

The disordered stretch occupies residues 1-82 (MSSKGLKPQK…LTEARKKKRK (82 aa)). Residues 9–404 (QKSTKRKDTD…RPLLQLLHPN (396 aa)) form the PUM-HD domain. Composition is skewed to basic and acidic residues over residues 14–27 (RKDT…DSLK) and 67–76 (RVQAKELTEA). Pumilio repeat units lie at residues 118–153 (KMKG…VLFT), 154–189 (ELQP…ACIS), 190–225 (SLRG…ELLA), 303–340 (QLLT…KIIK), and 341–378 (AMKE…IIVR). The disordered stretch occupies residues 427 to 468 (MDKSETSSKTKDTDGNEIGEETKDEQEDTVAEHSDHEENVTA). Positions 428 to 440 (DKSETSSKTKDTD) are enriched in basic and acidic residues. Residues 441–455 (GNEIGEETKDEQEDT) are compositionally biased toward acidic residues. Basic and acidic residues predominate over residues 456-468 (VAEHSDHEENVTA).

It localises to the nucleus. The protein localises to the nucleolus. Its function is as follows. Sequence-specific RNA-binding protein that regulates translation and mRNA stability by binding the 3'-UTR of target mRNAs. This Arabidopsis thaliana (Mouse-ear cress) protein is Pumilio homolog 24 (APUM24).